The sequence spans 691 residues: Penicillin-binding protein 2D (691 aa).

At 1 to 19 the chain is on the cytoplasmic side; the sequence is MDAMTNKRLRLTLKTVRAF. Residues 20–40 form a helical; Signal-anchor for type II membrane protein membrane-spanning segment; the sequence is IFLGAFAALAAAAVFMTVILI. Residues 41 to 691 are Extracellular-facing; it reads AKYQGAPSVQ…WWDKWLGRHH (651 aa). The transglycosylase stretch occupies residues 55-223; sequence TILYASDGSK…PSGYSPYVNE (169 aa). Residue Glu-94 is the Proton donor; for transglycosylase activity of the active site. Residues 327-605 are transpeptidase; sequence VGFSAIDPRT…AKTIWADFME (279 aa). Ser-365 serves as the catalytic Acyl-ester intermediate; for transpeptidase activity. Positions 663-691 are disordered; it reads AKQTKDRLPSKEKPASEKKWWDKWLGRHH. The segment covering 664-691 has biased composition (basic and acidic residues); that stretch reads KQTKDRLPSKEKPASEKKWWDKWLGRHH.

In the N-terminal section; belongs to the glycosyltransferase 51 family. It in the C-terminal section; belongs to the transpeptidase family.

It localises to the cell membrane. It carries out the reaction [GlcNAc-(1-&gt;4)-Mur2Ac(oyl-L-Ala-gamma-D-Glu-L-Lys-D-Ala-D-Ala)](n)-di-trans,octa-cis-undecaprenyl diphosphate + beta-D-GlcNAc-(1-&gt;4)-Mur2Ac(oyl-L-Ala-gamma-D-Glu-L-Lys-D-Ala-D-Ala)-di-trans,octa-cis-undecaprenyl diphosphate = [GlcNAc-(1-&gt;4)-Mur2Ac(oyl-L-Ala-gamma-D-Glu-L-Lys-D-Ala-D-Ala)](n+1)-di-trans,octa-cis-undecaprenyl diphosphate + di-trans,octa-cis-undecaprenyl diphosphate + H(+). The catalysed reaction is Preferential cleavage: (Ac)2-L-Lys-D-Ala-|-D-Ala. Also transpeptidation of peptidyl-alanyl moieties that are N-acyl substituents of D-alanine.. It functions in the pathway cell wall biogenesis; peptidoglycan biosynthesis. Involved in the polymerization and cross-linking of spore peptidoglycan. May be required for synthesis of the spore germ cell wall, the first layer of peptidoglycan synthesized on the surface of the inner forespore membrane. The chain is Penicillin-binding protein 2D (pbpG) from Bacillus subtilis (strain 168).